The chain runs to 450 residues: FAD-linked oxidoreductase ptmO (450 aa).

Positions 32-203 (PPELPYAIVR…TRFFIRTRPA (172 aa)) constitute an FAD-binding PCMH-type domain.

It belongs to the oxygen-dependent FAD-linked oxidoreductase family. FAD is required as a cofactor.

It participates in secondary metabolite biosynthesis. Its function is as follows. FAD-linked oxidoreductase; part of the gene cluster that mediates the biosynthesis of the indole diterpenes penitrems. The geranylgeranyl diphosphate (GGPP) synthase ptmG catalyzes the first step in penitrem biosynthesis via conversion of farnesyl pyrophosphate and isopentyl pyrophosphate into geranylgeranyl pyrophosphate (GGPP). Condensation of indole-3-glycerol phosphate with GGPP by the prenyl transferase ptmC then forms 3-geranylgeranylindole (3-GGI). Epoxidation by the FAD-dependent monooxygenase ptmM leads to a epoxidized-GGI that is substrate of the terpene cyclase ptmB for cyclization to yield paspaline. Paspaline is subsequently converted to 13-desoxypaxilline by the cytochrome P450 monooxygenase ptmP, the latter being then converted to paxilline by the cytochrome P450 monooxygenase ptmQ. Paxilline is converted to beta-paxitriol via C-10 ketoreduction by the short-chain dehydrogenase ptmH which can be monoprenylated at the C-20 by the indole diterpene prenyltransferase ptmD. A two-step elimination (acetylation and elimination) process performed by the O-acetyltransferase ptmV and ptmI leads to the production of the prenylated form of penijanthine. The FAD-linked oxidoreductase ptmO then converts the prenylated form of penijanthine into PC-M5 which is in turn transformed into PC-M4 by the aromatic dimethylallyltransferase ptmE. Five sequential oxidative transformations performed by the cytochrome P450 monooxygenases ptmK, ptmU, ptmL, ptmN and ptmJ yield the various penitrem compounds. PtmK, ptmU and ptmM are involved in the formation of the key bicyclic ring of penitrem C via the formation of the intermediates secopenitrem D and penitrem D. PtmL catalyzes the epoxidation of penitrem D and C to yield penitrem B and F, respectively. PtmJ catalyzes the last benzylic hydroxylation to convert penitrem B to prenitrem E and penitrem F to penitrem A. This is FAD-linked oxidoreductase ptmO from Penicillium ochrochloron.